The chain runs to 499 residues: Low-affinity inorganic phosphate transporter PitB (499 aa).

10 consecutive transmembrane segments (helical) span residues 5–25, 52–72, 94–114, 124–144, 155–175, 207–227, 233–253, 382–402, 430–450, and 473–493; these read FVGLDIYTGLLLLLALAFVLF, LAVVMAAFFNFFGVLLGGLSV, LAMVFSMLLAAIIWNLGTWFF, LIGAIIGIGLTNALLTGSSVM, IFSSLIVSPIVGLVIAGGLIF, PFWTRIALIVSAAGVAFSHGA, GIGLVMLVLVGIAPAGFVVNM, APVWIIMAVALALGIGTMIGW, AAVSIGLASYIGMPVSTTHVL, and ILMAWVFTLPAAIFLSGGLYW.

This sequence belongs to the inorganic phosphate transporter (PiT) (TC 2.A.20) family. Pit subfamily.

It is found in the cell inner membrane. The catalysed reaction is phosphate(in) + H(+)(in) = phosphate(out) + H(+)(out). Functionally, low-affinity inorganic phosphate transporter. This chain is Low-affinity inorganic phosphate transporter PitB, found in Escherichia coli (strain K12).